A 644-amino-acid polypeptide reads, in one-letter code: Transcription factor btd (644 aa).

2 disordered regions span residues 16–65 and 101–196; these read HQAQ…TQQQ and APPS…AGSP. 2 stretches are compositionally biased toward low complexity: residues 101–119 and 140–196; these read APPS…SSPL and ASPN…AGSP. 3 consecutive C2H2-type zinc fingers follow at residues 333–357, 363–385, and 391–413; these read HICH…LRWH, FLCL…GRTH, and YACP…KKTH. Disordered regions lie at residues 437–461 and 478–537; these read LEKK…QPDT and TSAG…SSSA. Composition is skewed to low complexity over residues 499–508 and 521–537; these read TTTTSSAAAS and AIQP…SSSA.

It is found in the nucleus. Its function is as follows. Required for the development of the antennal, intercalary and mandibular segments of the head. The polypeptide is Transcription factor btd (btd) (Drosophila melanogaster (Fruit fly)).